The chain runs to 402 residues: Major outer membrane porin (402 aa).

Residues 1–22 (MKKLLKSALLFAATGSALSLQA) form the signal peptide.

This sequence belongs to the chlamydial porin (CP) (TC 1.B.2) family. As to quaternary structure, part of a disulfide cross-linked outer membrane complex (COMC) composed of the major outer membrane porin (MOMP), the small cysteine-rich protein (OmcA) and the large cysteine-rich periplasmic protein (OmcB).

The protein resides in the cell outer membrane. Functionally, in elementary bodies (EBs, the infectious stage, which is able to survive outside the host cell) provides the structural integrity of the outer envelope through disulfide cross-links with the small cysteine-rich protein and the large cysteine-rich periplasmic protein. It has been described in publications as the Sarkosyl-insoluble COMC (Chlamydia outer membrane complex), and serves as the functional equivalent of peptidoglycan. It is present but some of the disulfide bonds are reduced in reticulate bodies (RBs). Permits diffusion of specific solutes through the outer membrane. This chain is Major outer membrane porin (ompA), found in Chlamydophila psittaci (strain ATCC VR-125 / 6BC) (Chlamydia psittaci).